A 750-amino-acid chain; its full sequence is Photosystem I P700 chlorophyll a apoprotein A1 (750 aa).

8 helical membrane-spanning segments follow: residues 70 to 93 (VFSAHFGQLSIIFLWLSGMYFHGA), 156 to 179 (LYCTAIGALVFAALMLFAGWFHYH), 195 to 219 (LNHHLAGLLGLGSLSWAGHQVHVSL), 291 to 309 (IAHHHLAIAILFLIAGHMY), 346 to 369 (WHAQLSINLAMLGSLTIIVAHHMY), 385 to 411 (LSLFTHHMWIGGFLIVGAAAHAAIFMV), 433 to 455 (AIISHLNWVCIFLGFHSFGLYIH), and 531 to 549 (FLVHHIHAFTIHVTVLILL). [4Fe-4S] cluster-binding residues include C573 and C582. 2 helical membrane-spanning segments follow: residues 589–610 (HVFLGLFWMYNSISVVIFHFSW) and 664–686 (LSAYGLFFLGAHFVWAFSLMFLF). H675 is a binding site for chlorophyll a'. Chlorophyll a is bound by residues M683 and Y691. Phylloquinone is bound at residue W692. The chain crosses the membrane as a helical span at residues 724-744 (AVGVTHYLLGGIATTWAFFLA).

Belongs to the PsaA/PsaB family. As to quaternary structure, the PsaA/B heterodimer binds the P700 chlorophyll special pair and subsequent electron acceptors. PSI consists of a core antenna complex that captures photons, and an electron transfer chain that converts photonic excitation into a charge separation. The eukaryotic PSI reaction center is composed of at least 11 subunits. P700 is a chlorophyll a/chlorophyll a' dimer, A0 is one or more chlorophyll a, A1 is one or both phylloquinones and FX is a shared 4Fe-4S iron-sulfur center. is required as a cofactor.

Its subcellular location is the plastid. The protein resides in the chloroplast thylakoid membrane. It catalyses the reaction reduced [plastocyanin] + hnu + oxidized [2Fe-2S]-[ferredoxin] = oxidized [plastocyanin] + reduced [2Fe-2S]-[ferredoxin]. Its function is as follows. PsaA and PsaB bind P700, the primary electron donor of photosystem I (PSI), as well as the electron acceptors A0, A1 and FX. PSI is a plastocyanin-ferredoxin oxidoreductase, converting photonic excitation into a charge separation, which transfers an electron from the donor P700 chlorophyll pair to the spectroscopically characterized acceptors A0, A1, FX, FA and FB in turn. Oxidized P700 is reduced on the lumenal side of the thylakoid membrane by plastocyanin. In Cucumis sativus (Cucumber), this protein is Photosystem I P700 chlorophyll a apoprotein A1.